The following is a 219-amino-acid chain: MHTAWQEILKEEKEKDYFIRLWDFVKTAYRETTVYPPKDRIFHAFDAVAPQDVRCVILGQDPYHGPNQANGLSFSVNDGVAIPPSLRNMYKELMSDLGCPAPTTGNLEAWSNQGVFLLNTSLTVEAGKAGSHAKKGWESFTDRVIEVLGQQEQPIVFILWGNHAKSKKSLIDTNRHLVLESVHPSPLSASRGFFGSRPYSQTNDWLQQQNRTPIDWCIS.

Asp61 (proton acceptor) is an active-site residue.

It belongs to the uracil-DNA glycosylase (UDG) superfamily. UNG family.

It is found in the cytoplasm. The enzyme catalyses Hydrolyzes single-stranded DNA or mismatched double-stranded DNA and polynucleotides, releasing free uracil.. Excises uracil residues from the DNA which can arise as a result of misincorporation of dUMP residues by DNA polymerase or due to deamination of cytosine. This Exiguobacterium sibiricum (strain DSM 17290 / CCUG 55495 / CIP 109462 / JCM 13490 / 255-15) protein is Uracil-DNA glycosylase.